The chain runs to 271 residues: Putative pirin-like protein At3g59260 (271 aa).

It belongs to the pirin family.

The protein resides in the nucleus. This Arabidopsis thaliana (Mouse-ear cress) protein is Putative pirin-like protein At3g59260.